The following is a 99-amino-acid chain: ATP-dependent Clp protease adapter protein ClpS (99 aa).

Belongs to the ClpS family. As to quaternary structure, binds to the N-terminal domain of the chaperone ClpA.

Functionally, involved in the modulation of the specificity of the ClpAP-mediated ATP-dependent protein degradation. In Acetivibrio thermocellus (strain ATCC 27405 / DSM 1237 / JCM 9322 / NBRC 103400 / NCIMB 10682 / NRRL B-4536 / VPI 7372) (Clostridium thermocellum), this protein is ATP-dependent Clp protease adapter protein ClpS.